The primary structure comprises 109 residues: Oncomodulin-1 (109 aa).

S2 is modified (N-acetylserine). 2 consecutive EF-hand domains span residues 39 to 74 and 78 to 109; these read MSANQVKDVFRFIDNDQSGYLDEEELKFFLQKFESG and LTESETKSLMAAADNDGDGKIGAEEFQEMVHS. Ca(2+) contacts are provided by D52, D54, S56, Y58, E63, D91, D93, D95, K97, and E102.

It belongs to the parvalbumin family.

Its function is as follows. Has some calmodulin-like activity with respect to enzyme activation and growth regulation. Binds two calcium ions. In Homo sapiens (Human), this protein is Oncomodulin-1 (OCM).